The sequence spans 106 residues: Small ribosomal subunit protein uS10 (106 aa).

It belongs to the universal ribosomal protein uS10 family. Part of the 30S ribosomal subunit.

Involved in the binding of tRNA to the ribosomes. This is Small ribosomal subunit protein uS10 from Prochlorococcus marinus (strain MIT 9301).